The sequence spans 257 residues: Adenylate kinase (257 aa).

Glycine 52–threonine 57 serves as a coordination point for ATP. Residues alanine 72–valine 101 form an NMP region. AMP contacts are provided by residues threonine 73, arginine 78, glycine 99 to valine 101, glycine 128 to arginine 131, and glutamine 135. The LID stretch occupies residues glycine 169 to aspartate 206. Residues arginine 170 and serine 179 to tyrosine 180 contribute to the ATP site. 2 residues coordinate AMP: arginine 203 and arginine 214. Glutamine 242 serves as a coordination point for ATP.

It belongs to the adenylate kinase family. AK2 subfamily. As to quaternary structure, monomer.

Its subcellular location is the cytoplasm. It is found in the cytosol. The protein localises to the mitochondrion intermembrane space. It carries out the reaction AMP + ATP = 2 ADP. In terms of biological role, catalyzes the reversible transfer of the terminal phosphate group between ATP and AMP. Plays an important role in cellular energy homeostasis and in adenine nucleotide metabolism. Adenylate kinase activity is critical for regulation of the phosphate utilization and the AMP de novo biosynthesis pathways. The sequence is that of Adenylate kinase (adk1) from Neosartorya fischeri (strain ATCC 1020 / DSM 3700 / CBS 544.65 / FGSC A1164 / JCM 1740 / NRRL 181 / WB 181) (Aspergillus fischerianus).